The primary structure comprises 849 residues: Trehalose-phosphatase (849 aa).

The tract at residues 1–558 (MPSGAQGNTQ…VKALESHMTT (558 aa)) is glycosyltransferase.

In the N-terminal section; belongs to the glycosyltransferase 20 family. The protein in the C-terminal section; belongs to the trehalose phosphatase family. Mg(2+) is required as a cofactor.

It is found in the cytoplasm. The protein localises to the nucleus. The catalysed reaction is alpha,alpha-trehalose 6-phosphate + H2O = alpha,alpha-trehalose + phosphate. It functions in the pathway carbohydrate biosynthesis. Phosphatase catalytic subunit of the trehalose synthase complex that catalyzes the production of trehalose from glucose-6-phosphate and UDP-glucose in a two step process. This chain is Trehalose-phosphatase (tps2), found in Schizosaccharomyces pombe (strain 972 / ATCC 24843) (Fission yeast).